A 254-amino-acid polypeptide reads, in one-letter code: Pimeloyl-[acyl-carrier protein] methyl ester esterase (254 aa).

Substrate is bound by residues tryptophan 20, 80–81 (SL), and 141–145 (FLALQ). Serine 80 acts as the Nucleophile in catalysis. Active-site residues include aspartate 205 and histidine 233. Substrate is bound at residue histidine 233.

It belongs to the AB hydrolase superfamily. Carboxylesterase BioH family. In terms of assembly, monomer.

The protein resides in the cytoplasm. The catalysed reaction is 6-carboxyhexanoyl-[ACP] methyl ester + H2O = 6-carboxyhexanoyl-[ACP] + methanol + H(+). It participates in cofactor biosynthesis; biotin biosynthesis. In terms of biological role, the physiological role of BioH is to remove the methyl group introduced by BioC when the pimeloyl moiety is complete. It allows to synthesize pimeloyl-ACP via the fatty acid synthetic pathway through the hydrolysis of the ester bonds of pimeloyl-ACP esters. This is Pimeloyl-[acyl-carrier protein] methyl ester esterase from Methylococcus capsulatus (strain ATCC 33009 / NCIMB 11132 / Bath).